Consider the following 122-residue polypeptide: Large ribosomal subunit protein uL14 (122 aa).

This sequence belongs to the universal ribosomal protein uL14 family. In terms of assembly, part of the 50S ribosomal subunit. Forms a cluster with proteins L3 and L19. In the 70S ribosome, L14 and L19 interact and together make contacts with the 16S rRNA in bridges B5 and B8.

Binds to 23S rRNA. Forms part of two intersubunit bridges in the 70S ribosome. The protein is Large ribosomal subunit protein uL14 of Chlorobium phaeobacteroides (strain DSM 266 / SMG 266 / 2430).